The following is a 265-amino-acid chain: Palmitoyltransferase ZDHHC21 (265 aa).

Residues 1-16 (MGLRIHFVVDPHGWCC) lie on the Cytoplasmic side of the membrane. A helical membrane pass occupies residues 17–37 (MGLIVFVWLYNIVIIPKIVLF). The Extracellular segment spans residues 38–44 (PHYEEGH). A helical transmembrane segment spans residues 45–65 (IPGILIIIFYGISIFCLVALV). The Cytoplasmic portion of the chain corresponds to 66 to 133 (RASLTDPGRL…NNCVGEDNHW (68 aa)). In terms of domain architecture, DHHC spans 90 to 140 (ELCNKCNLMRPKRSHHCSRCGHCVRRMDHHCPWINNCVGEDNHWLFLQLCF). Cys120 functions as the S-palmitoyl cysteine intermediate in the catalytic mechanism. The helical transmembrane segment at 134–154 (LFLQLCFYTELLTCYALMFSF) threads the bilayer. The Extracellular segment spans residues 155–185 (CHYYYFLPLKKRNLDLFVVRHELAIMRLAAF). The chain crosses the membrane as a helical span at residues 186 to 206 (MGITMLVGITGLFYTQLIGII). Topologically, residues 207–265 (TDTTSIEKMSNCCEEISRPRKPWQQTFSEVFGTRWKILWFIPFRQRQPLRVPYHFANHV) are cytoplasmic.

This sequence belongs to the DHHC palmitoyltransferase family. Widely expressed. Expressed in Henle's layer within the hair bulb and the hair shaft cuticle (at protein level). Expression is limited to the post-mitotic lineages of inner root sheath (IRS) and cuticle.

The protein resides in the golgi apparatus membrane. It is found in the golgi apparatus. Its subcellular location is the cis-Golgi network membrane. It localises to the cell membrane. The catalysed reaction is L-cysteinyl-[protein] + hexadecanoyl-CoA = S-hexadecanoyl-L-cysteinyl-[protein] + CoA. Functionally, palmitoyltransferase that catalyzes the addition of palmitate onto various protein substrates. Palmitoylates sex steroid hormone receptors, including ESR1, PGR and AR, thereby regulating their targeting to the plasma membrane. This affects rapid intracellular signaling by sex hormones via ERK and AKT kinases and the generation of cAMP, but does not affect that mediated by their nuclear receptor. Palmitoylates FYN, regulates its localization in hair follicles and plays a key role in epidermal homeostasis and hair follicle differentiation. Through the palmitoylation of PLCB1 and the regulation of PLCB1 downstream signaling may indirectly regulate the function of the endothelial barrier and the adhesion of leukocytes to the endothelium. Also has a palmitoyltransferase activity toward ADRA1D, positively regulating its activity and expression and may thereby play a role in vascular contraction. May also palmitoylate eNOS and LCK. The protein is Palmitoyltransferase ZDHHC21 of Mus musculus (Mouse).